A 528-amino-acid polypeptide reads, in one-letter code: Potassium voltage-gated channel subfamily A member 3 (528 aa).

Residues Met1–Gly32 form a disordered region. Residues Met1 to Arg187 are Cytoplasmic-facing. Residues Ala15–Gly32 show a composition bias toward gly residues. The helical transmembrane segment at Gly188–Leu206 threads the bilayer. At Glu207–Pro247 the chain is on the extracellular side. N-linked (GlcNAc...) asparagine glycosylation is present at Asn232. The chain crosses the membrane as a helical span at residues Phe248–Ala269. Cys270 carries the S-palmitoyl cysteine lipid modification. Residues Cys270–Ile280 lie on the Cytoplasmic side of the membrane. A helical membrane pass occupies residues Met281–Ala301. Over Glu302–Ile315 the chain is Extracellular. The chain crosses the membrane as a helical; Voltage-sensor span at residues Leu316–Ser334. Residues Lys335–Glu350 are Cytoplasmic-facing. Residues Leu351–Tyr370 form a helical membrane-spanning segment. Topologically, residues Phe371–Lys411 are extracellular. A Selectivity filter motif is present at residues Thr397–Asp402. The chain crosses the membrane as a helical span at residues Ile412 to Ser434. The Cytoplasmic segment spans residues Asn435–Val528. Residues Asn435–Val528 are interaction with KCNE4. The residue at position 452 (Tyr452) is a Phosphotyrosine. At Ser473 the chain carries Phosphoserine; by PKA. The PDZ-binding signature appears at Thr526–Val528.

This sequence belongs to the potassium channel family. A (Shaker) (TC 1.A.1.2) subfamily. Kv1.3/KCNA3 sub-subfamily. In terms of assembly, homotetramer. Forms heterooligomers with KCNE4 which inhibits KCNA3 activity by impairing localization to the cell membrane. The stoichiometry of KCNA3 and KCNE4 in the heterooligomers are 4:1, 4:2, 4:3 or 4:4 respectively. Increasing the number of KCNE4 subunits steadily slows the activation KCNA3 and decreases its abundance at the cell membrane. However, a single subunit of KCNE4 is sufficient for the cooperative enhancement of the inactivating function of the channel. Interacts with SEC24D; this interaction is reduced in the presence of KCNE4. Interacts with DLG1, DLG2 and DLG4 via their PDZ domains. Post-translationally, N-glycosylation promotes the cell surface expression. Phosphorylation on Tyr-452 inhibits its channel activity.

Its subcellular location is the cell membrane. It catalyses the reaction K(+)(in) = K(+)(out). Its activity is regulated as follows. Activity is up-regulated by JAK2. Functionally, mediates the voltage-dependent potassium ion permeability of excitable membranes. Assuming opened or closed conformations in response to the voltage difference across the membrane, the protein forms a potassium-selective channel through which potassium ions may pass in accordance with their electrochemical gradient. This Mus musculus (Mouse) protein is Potassium voltage-gated channel subfamily A member 3 (Kcna3).